The sequence spans 770 residues: Conserved oligomeric Golgi complex subunit 7 (770 aa).

It belongs to the COG7 family. Component of the conserved oligomeric Golgi complex which is composed of eight different subunits and is required for normal Golgi morphology and localization.

The protein localises to the golgi apparatus membrane. Functionally, required for normal Golgi function. The protein is Conserved oligomeric Golgi complex subunit 7 (Cog7) of Mus musculus (Mouse).